We begin with the raw amino-acid sequence, 349 residues long: Protein-glutamate methylesterase/protein-glutamine glutaminase (349 aa).

The Response regulatory domain occupies 5–122 (RVLSVDDSAL…REGMLAYSEM (118 aa)). Asp-56 is subject to 4-aspartylphosphate. The 193-residue stretch at 152 to 344 (LLSSEKLIAI…QQMLAKISAG (193 aa)) folds into the CheB-type methylesterase domain. Active-site residues include Ser-164, His-190, and Asp-286.

Belongs to the CheB family. Post-translationally, phosphorylated by CheA. Phosphorylation of the N-terminal regulatory domain activates the methylesterase activity.

It is found in the cytoplasm. The catalysed reaction is [protein]-L-glutamate 5-O-methyl ester + H2O = L-glutamyl-[protein] + methanol + H(+). It catalyses the reaction L-glutaminyl-[protein] + H2O = L-glutamyl-[protein] + NH4(+). Functionally, involved in chemotaxis. Part of a chemotaxis signal transduction system that modulates chemotaxis in response to various stimuli. Catalyzes the demethylation of specific methylglutamate residues introduced into the chemoreceptors (methyl-accepting chemotaxis proteins or MCP) by CheR. Also mediates the irreversible deamidation of specific glutamine residues to glutamic acid. This Salmonella paratyphi A (strain ATCC 9150 / SARB42) protein is Protein-glutamate methylesterase/protein-glutamine glutaminase.